A 221-amino-acid chain; its full sequence is Protein GrpE 1 (221 aa).

Disordered stretches follow at residues 1 to 44 (MTEE…AAAQ) and 192 to 221 (VAEP…PEEG). Positions 26–44 (KAAPSEGAAPAGDAAAAAQ) are enriched in low complexity. Residues 203-221 (KADEAEAADDKESGGPEEG) are compositionally biased toward basic and acidic residues.

This sequence belongs to the GrpE family. In terms of assembly, homodimer.

Its subcellular location is the cytoplasm. In terms of biological role, participates actively in the response to hyperosmotic and heat shock by preventing the aggregation of stress-denatured proteins, in association with DnaK and GrpE. It is the nucleotide exchange factor for DnaK and may function as a thermosensor. Unfolded proteins bind initially to DnaJ; upon interaction with the DnaJ-bound protein, DnaK hydrolyzes its bound ATP, resulting in the formation of a stable complex. GrpE releases ADP from DnaK; ATP binding to DnaK triggers the release of the substrate protein, thus completing the reaction cycle. Several rounds of ATP-dependent interactions between DnaJ, DnaK and GrpE are required for fully efficient folding. This Streptomyces avermitilis (strain ATCC 31267 / DSM 46492 / JCM 5070 / NBRC 14893 / NCIMB 12804 / NRRL 8165 / MA-4680) protein is Protein GrpE 1.